Reading from the N-terminus, the 294-residue chain is Casein kinase II subunit beta (294 aa).

Disordered regions lie at residues 66–90 (DHNTDNTTTNTSNNNDSRNGTSKRN) and 269–294 (KRMEEDDEEEEDEVEEEDDDRTMASE). Low complexity predominate over residues 70-87 (DNTTTNTSNNNDSRNGTS). The span at 273 to 288 (EDDEEEEDEVEEEDDD) shows a compositional bias: acidic residues.

This sequence belongs to the casein kinase 2 subunit beta family. Tetramer composed of two alpha chains, one beta chain and one beta' chain. Post-translationally, phosphorylated by alpha subunit.

Functionally, regulatory subunit of casein kinase II/CK2. As part of the kinase complex regulates the basal catalytic activity of the alpha subunit a constitutively active serine/threonine-protein kinase that phosphorylates a large number of substrates containing acidic residues C-terminal to the phosphorylated serine or threonine. This Candida albicans (Yeast) protein is Casein kinase II subunit beta (CKB1).